The following is a 130-amino-acid chain: MYRALTKDIEVVVEPFYLEEQSDPEDDRYVWGYRIVISNNSAIAVRLVNRYWNITDQNGQVDEVTGPGVVGEQPRLSPGDTYEYSSGCPLDTPSGLMFGHYQMETDEGEMFDVDIPAFSLDSPGLLRVLN.

Positions 3–127 (RALTKDIEVV…FSLDSPGLLR (125 aa)) constitute an ApaG domain.

This chain is Protein ApaG, found in Rhizobium leguminosarum bv. trifolii (strain WSM2304).